Reading from the N-terminus, the 265-residue chain is Aquaporin-5 (265 aa).

The Cytoplasmic portion of the chain corresponds to 1-12 (MKKEVCSAAFLK). Residues 13 to 33 (AVFAEFLATLIFVFFGLGSAL) traverse the membrane as a helical segment. The Extracellular segment spans residues 34 to 39 (KWPSAM). Residues 40–60 (PSVLQISLAFGLAIGTMAQAL) form a helical membrane-spanning segment. Residues 61–65 (GPVSG) are Cytoplasmic-facing. An intramembrane region (discontinuously helical) is located at residues 66 to 74 (GHMNPAITL). The short motif at 69-71 (NPA) is the NPA 1 element. Residues 75–87 (ALLVGNQISLLRA) lie on the Cytoplasmic side of the membrane. A helical membrane pass occupies residues 88-108 (VFYLVAQLVGAIAGAAILYGL). The Extracellular portion of the chain corresponds to 109-126 (APYNARSNLAVNALNNNT). Asparagine 124 and asparagine 125 each carry an N-linked (GlcNAc...) asparagine glycan. Residues 127–147 (TAGQAVVAEMILTFQLALCVF) form a helical membrane-spanning segment. Residues 148–158 (SSTDSRRTSPV) lie on the Cytoplasmic side of the membrane. The helical transmembrane segment at 159 to 179 (GSPALSIGLSVTLGHLVGIYF) threads the bilayer. Threonine 180 is a topological domain (extracellular). Positions 181 to 191 (GCSMNPARSFG) form an intramembrane region, discontinuously helical. An NPA 2 motif is present at residues 185-187 (NPA). Topologically, residues 192 to 203 (PAVIMSRFSSAH) are extracellular. Residues 204–224 (WVFWVGPIVGAATAAIIYFYL) traverse the membrane as a helical segment. Topologically, residues 225-265 (LFPHSLSLSDRVAILKGTYEPDEDWEESQEERKKTMELTAH) are cytoplasmic.

The protein belongs to the MIP/aquaporin (TC 1.A.8) family. As to quaternary structure, homotetramer; each monomer provides an independent water pore. Interacts with TRPV4; the interaction is probably indirect and regulates TRPV4 activation by hypotonicity.

The protein localises to the apical cell membrane. It is found in the cell membrane. Its subcellular location is the cytoplasmic vesicle membrane. The enzyme catalyses H2O(in) = H2O(out). Aquaporins form homotetrameric transmembrane channels, with each monomer independently mediating water transport across the plasma membrane along its osmotic gradient. Plays an important role in fluid secretion in salivary glands. Required for TRPV4 activation by hypotonicity. Together with TRPV4, controls regulatory volume decrease in salivary epithelial cells. Seems to play a redundant role in water transport in the eye, lung and in sweat glands. This is Aquaporin-5 from Ovis aries (Sheep).